A 193-amino-acid polypeptide reads, in one-letter code: 21 kDa protein (193 aa).

A signal peptide spans 1–22 (MKLSKSTLVFSALLVILAAASA).

The polypeptide is 21 kDa protein (Daucus carota (Wild carrot)).